Here is a 225-residue protein sequence, read N- to C-terminus: MAKRKQGIFGRIWFVAWRFLLLFVIVLFLFRFVPLPTTSFMLQSQYPVKHTWISIDKLPTYMPLAVVASEDQRFPDHFGVDFTAISKALDQYDDGDGLRGASTITQQTAKNLFLWSGRSFIRKGLEAGLAIGLETLWGKKRILEVYLNIAEFGKGIYGVEAASQHYFGRSASKLTMNQAARLAVLLPSPRTRNPNDLTFYLRERVDWVERQMQQLGPDYLKPIIE.

The chain crosses the membrane as a helical span at residues 12-32; the sequence is IWFVAWRFLLLFVIVLFLFRF.

Belongs to the glycosyltransferase 51 family.

The protein localises to the cell inner membrane. The enzyme catalyses [GlcNAc-(1-&gt;4)-Mur2Ac(oyl-L-Ala-gamma-D-Glu-L-Lys-D-Ala-D-Ala)](n)-di-trans,octa-cis-undecaprenyl diphosphate + beta-D-GlcNAc-(1-&gt;4)-Mur2Ac(oyl-L-Ala-gamma-D-Glu-L-Lys-D-Ala-D-Ala)-di-trans,octa-cis-undecaprenyl diphosphate = [GlcNAc-(1-&gt;4)-Mur2Ac(oyl-L-Ala-gamma-D-Glu-L-Lys-D-Ala-D-Ala)](n+1)-di-trans,octa-cis-undecaprenyl diphosphate + di-trans,octa-cis-undecaprenyl diphosphate + H(+). It functions in the pathway cell wall biogenesis; peptidoglycan biosynthesis. In terms of biological role, peptidoglycan polymerase that catalyzes glycan chain elongation from lipid-linked precursors. This is Biosynthetic peptidoglycan transglycosylase from Marinomonas sp. (strain MWYL1).